The chain runs to 149 residues: Arginine regulator (149 aa).

This sequence belongs to the ArgR family.

The protein resides in the cytoplasm. It participates in amino-acid degradation; L-arginine degradation via ADI pathway. Its function is as follows. Regulates the transcription of the arc operon, involved in arginine catabolism. This chain is Arginine regulator (argR1), found in Bacillus cereus (strain ATCC 14579 / DSM 31 / CCUG 7414 / JCM 2152 / NBRC 15305 / NCIMB 9373 / NCTC 2599 / NRRL B-3711).